The following is a 419-amino-acid chain: MAKTGVEILCVGTELLLGDILNGNARWLAQRLADLGLPHFRQTVVGDNTERLMGAVREAAGRCRILITTGGLGPTPDDLTTAALAAAFDTPLEERPELWEEIQAKLSAGGRAVAASNRSQAFLPIGADVLPNSLGSAPGMIWSPCPDFTILTFPGVPSEMRSMWVETAEPWLRQNAGAPSAFVSRRLHFTGIGESDLAEQVGDLLDSANPTVAPYAALGDVTLRLTASGSSPGQAEAVLHPMEEQLLQRTGRFCYGRDDDTLAAVVLRLLGEAGQTLAVAESCTGGALGAALTAVPGSSAVFSGGVIAYSNAVKQQLLGVPAALLDEHGAVSEPVVKAMAEGLRSRFHCDWGIAISGVAGPGGGTIEKPVGMVCLALAGREGCDLWVQRFGARRGRSAVQQLSVIRALDRLRLRLLAQS.

The protein belongs to the CinA family.

This Synechococcus sp. (strain CC9902) protein is CinA-like protein.